The sequence spans 503 residues: Intracellular exo-alpha-(1-&gt;5)-L-arabinofuranosidase (503 aa).

Glu-27, Asn-72, and Asn-172 together coordinate alpha-L-arabinofuranose. The Proton donor/acceptor role is filled by Glu-173. Alpha-L-arabinofuranose contacts are provided by Tyr-244, Glu-292, and Gln-352. Residue Glu-292 is the Nucleophile of the active site.

Belongs to the glycosyl hydrolase 51 family. Homohexamer; trimer of dimers.

The protein localises to the cytoplasm. The catalysed reaction is Hydrolysis of terminal non-reducing alpha-L-arabinofuranoside residues in alpha-L-arabinosides.. The protein operates within glycan metabolism; L-arabinan degradation. In terms of biological role, involved in the degradation of arabinan and is a key enzyme in the complete degradation of the plant cell wall. Catalyzes the cleavage of terminal alpha-(1-&gt;5)-arabinofuranosyl bonds in small oligosaccharides as alpha-(1-&gt;5)-linked arabinobiose/arabinotriose, but does not display significant activity against linear non-substituted arabinan. It is also highly efficient in the cleavage of alpha-(1-&gt;3)-linked arabinoside of xylobiose and of the alpha-(1-&gt;3)-linked arabinoside decorations of polymeric wheat arabinoxylan. It exhibits very low activity against sugar beet arabinan. The protein is Intracellular exo-alpha-(1-&gt;5)-L-arabinofuranosidase of Acetivibrio thermocellus (strain ATCC 27405 / DSM 1237 / JCM 9322 / NBRC 103400 / NCIMB 10682 / NRRL B-4536 / VPI 7372) (Clostridium thermocellum).